A 594-amino-acid chain; its full sequence is Sucrose transport protein SUC3 (594 aa).

Ser-2 carries the post-translational modification N-acetylserine. Residues 2–58 (SDSVSISVPYRNLRKEIELETVTKHRQNESGSSSFSESASPSNHSDSADGESVSKNC) are Cytoplasmic-facing. The segment at 23-50 (VTKHRQNESGSSSFSESASPSNHSDSAD) is disordered. Residues 31–46 (SGSSSFSESASPSNHS) are compositionally biased toward low complexity. A helical membrane pass occupies residues 59 to 79 (SLVTLVLSCTVAAGVQFGWAL). Residues 80–98 (QLSLLTPYIQTLGISHAFS) are Extracellular-facing. Residues 99 to 119 (SFIWLCGPITGLVVQPFVGIW) form a helical membrane-spanning segment. The Cytoplasmic segment spans residues 120 to 131 (SDKCTSKYGRRR). Residues 132–152 (PFILVGSFMISIAVIIIGFSA) traverse the membrane as a helical segment. The Extracellular portion of the chain corresponds to 153–174 (DIGYLLGDSKEHCSTFKGTRTR). The chain crosses the membrane as a helical span at residues 175 to 195 (AAVVFIIGFWLLDLANNTVQG). The Cytoplasmic portion of the chain corresponds to 196 to 214 (PARALLADLSGPDQRNTAN). The helical transmembrane segment at 215–235 (AVFCLWMAIGNILGFSAGASG) threads the bilayer. Topologically, residues 236 to 257 (KWQEWFPFLTSRACCAACGNLK) are extracellular. Residues 258–278 (AAFLLAVVFLTICTLVTIYFA) traverse the membrane as a helical segment. Topologically, residues 279–365 (KEIPFTSNKP…LTSLRHLPPA (87 aa)) are cytoplasmic. The chain crosses the membrane as a helical span at residues 366–386 (MHSVLIVMALTWLSWFPFFLF). At 387-417 (DTDWMGREVYHGDPTGDSLHMELYDQGVREG) the chain is on the extracellular side. The helical transmembrane segment at 418–438 (ALGLLLNSVVLGISSFLIEPM) threads the bilayer. Residues 439–445 (CQRMGAR) lie on the Cytoplasmic side of the membrane. A helical transmembrane segment spans residues 446-466 (VVWALSNFTVFACMAGTAVIS). The Extracellular portion of the chain corresponds to 467–489 (LMSLSDDKNGIEYIMRGNETTRT). Asn-484 carries an N-linked (GlcNAc...) asparagine glycan. The helical transmembrane segment at 490–510 (AAVIVFALLGFPLAITYSVPF) threads the bilayer. Over 511–525 (SVTAEVTADSGGGQG) the chain is Cytoplasmic. The chain crosses the membrane as a helical span at residues 526 to 546 (LAIGVLNLAIVIPQMIVSLGA). The Extracellular portion of the chain corresponds to 547–555 (GPWDQLFGG). The helical transmembrane segment at 556-576 (GNLPAFVLASVAAFAAGVIAL) threads the bilayer. Topologically, residues 577–594 (QRLPTLSSSFKSTGFHIG) are cytoplasmic.

Belongs to the glycoside-pentoside-hexuronide (GPH) cation symporter transporter (TC 2.A.2.4) family. As to quaternary structure, homodimer. Interacts with SUC2 and SUC4. As to expression, mostly localized in parenchymatic cells next to vascular tissues (at protein level). Present in stipules, trichomes, hydathodes and guard cells of source leaves, as well as in lateral root tips and flowers.

It is found in the cell membrane. It catalyses the reaction sucrose(out) + H(+)(out) = sucrose(in) + H(+)(in). It participates in glycan biosynthesis; sucrose metabolism. Its activity is regulated as follows. Inhibited by protonophores (e.g. dinitrophenol and carbonyl cyanide m-chlorophenyl-hydrazone (CCCP)) and SH group inhibitors (e.g. p-chloromercuribenzene sulphonic acid (PCMBS)). Functionally, responsible for the transport of sucrose into the cell, with the concomitant uptake of protons (symport system). Can also transport maltose at a lesser rate. May also transport biotin. Probably involved in carpel maturation that leads to pod shatter and seed dispersal. In Arabidopsis thaliana (Mouse-ear cress), this protein is Sucrose transport protein SUC3.